The sequence spans 70 residues: DNA-directed RNA polymerase subunit epsilon (70 aa).

The protein belongs to the RNA polymerase subunit epsilon family. RNAP is composed of a core of 2 alpha, a beta and a beta' subunit. The core is associated with a delta subunit, and at least one of epsilon or omega. When a sigma factor is associated with the core the holoenzyme is formed, which can initiate transcription.

The enzyme catalyses RNA(n) + a ribonucleoside 5'-triphosphate = RNA(n+1) + diphosphate. Functionally, a non-essential component of RNA polymerase (RNAP). The chain is DNA-directed RNA polymerase subunit epsilon from Bacillus cereus (strain Q1).